The sequence spans 457 residues: uncharacterized protein (457 aa).

Residues 10–69 (ALLQGQTVTVPITALAAGGDGIARLTDGRVLFVAGAVPGDTVEARLVHLKKDHGFGKILQ) enclose the TRAM domain. Cys82, Cys88, Cys91, and Cys170 together coordinate [4Fe-4S] cluster. The S-adenosyl-L-methionine site is built by Gln294, Tyr323, Glu344, and Asp387. Catalysis depends on Cys414, which acts as the Nucleophile.

Belongs to the class I-like SAM-binding methyltransferase superfamily. RNA M5U methyltransferase family.

This is an uncharacterized protein from Gloeobacter violaceus (strain ATCC 29082 / PCC 7421).